Here is a 732-residue protein sequence, read N- to C-terminus: 1,4-alpha-glucan branching enzyme GlgB 1 (732 aa).

The Nucleophile role is filled by D411. The Proton donor role is filled by E464.

It belongs to the glycosyl hydrolase 13 family. GlgB subfamily. As to quaternary structure, monomer.

It catalyses the reaction Transfers a segment of a (1-&gt;4)-alpha-D-glucan chain to a primary hydroxy group in a similar glucan chain.. It participates in glycan biosynthesis; glycogen biosynthesis. Catalyzes the formation of the alpha-1,6-glucosidic linkages in glycogen by scission of a 1,4-alpha-linked oligosaccharide from growing alpha-1,4-glucan chains and the subsequent attachment of the oligosaccharide to the alpha-1,6 position. This Xanthomonas oryzae pv. oryzae (strain KACC10331 / KXO85) protein is 1,4-alpha-glucan branching enzyme GlgB 1.